A 155-amino-acid chain; its full sequence is MYRMQLLSCIALTLALVANGAPTSSSTGNTMKEVKSLLLDLQLLLEKVKNLENLKLSRMHTFNFYMPKVNDTELKHLKCLLEELKLLEDVLDLAPSKNRNTREIKDYMASLKGIVLELQGSETRFTCEYDDATVKAVEFQNKWTTFCQSIYSTLT.

The N-terminal stretch at 1–20 is a signal peptide; it reads MYRMQLLSCIALTLALVANG. Threonine 23 is a glycosylation site (O-linked (GalNAc...) threonine). A disulfide bond links cysteine 79 and cysteine 127.

The protein belongs to the IL-2 family.

The protein localises to the secreted. Its function is as follows. Cytokine produced by activated CD4-positive helper T-cells and to a lesser extend activated CD8-positive T-cells and natural killer (NK) cells that plays pivotal roles in the immune response and tolerance. Binds to a receptor complex composed of either the high-affinity trimeric IL-2R (IL2RA/CD25, IL2RB/CD122 and IL2RG/CD132) or the low-affinity dimeric IL-2R (IL2RB and IL2RG). Interaction with the receptor leads to oligomerization and conformation changes in the IL-2R subunits resulting in downstream signaling starting with phosphorylation of JAK1 and JAK3. In turn, JAK1 and JAK3 phosphorylate the receptor to form a docking site leading to the phosphorylation of several substrates including STAT5. This process leads to activation of several pathways including STAT, phosphoinositide-3-kinase/PI3K and mitogen-activated protein kinase/MAPK pathways. Functions as a T-cell growth factor and can increase NK-cell cytolytic activity as well. Promotes strong proliferation of activated B-cells and subsequently immunoglobulin production. Plays a pivotal role in regulating the adaptive immune system by controlling the survival and proliferation of regulatory T-cells, which are required for the maintenance of immune tolerance. Moreover, participates in the differentiation and homeostasis of effector T-cell subsets, including Th1, Th2, Th17 as well as memory CD8-positive T-cells. The protein is Interleukin-2 (IL2) of Capra hircus (Goat).